The primary structure comprises 813 residues: DNA ligase (813 aa).

NAD(+)-binding positions include 41-45 (DAEYD), 90-91 (SI), and Glu-127. The active-site N6-AMP-lysine intermediate is the Lys-129. Residues Arg-150, Glu-189, Lys-307, and Lys-331 each coordinate NAD(+). Cys-440, Cys-443, Cys-458, and Cys-464 together coordinate Zn(2+). One can recognise a BRCT domain in the interval 729–813 (AEEGALSGKT…LLQNPPGDSA (85 aa)).

This sequence belongs to the NAD-dependent DNA ligase family. LigA subfamily. The cofactor is Mg(2+). It depends on Mn(2+) as a cofactor.

It carries out the reaction NAD(+) + (deoxyribonucleotide)n-3'-hydroxyl + 5'-phospho-(deoxyribonucleotide)m = (deoxyribonucleotide)n+m + AMP + beta-nicotinamide D-nucleotide.. Its function is as follows. DNA ligase that catalyzes the formation of phosphodiester linkages between 5'-phosphoryl and 3'-hydroxyl groups in double-stranded DNA using NAD as a coenzyme and as the energy source for the reaction. It is essential for DNA replication and repair of damaged DNA. The polypeptide is DNA ligase (Ralstonia nicotianae (strain ATCC BAA-1114 / GMI1000) (Ralstonia solanacearum)).